Consider the following 110-residue polypeptide: Late cornified envelope protein 2D (110 aa).

The protein belongs to the LCE family. In terms of tissue distribution, skin-specific. Expression was readily detected in adult trunk skin, adult arm skin, fetal skin, penal skin, vulva, esophagus and tongue. Not expressed in the cervix, rectum, lung, colon, or placenta.

In terms of biological role, precursors of the cornified envelope of the stratum corneum. The polypeptide is Late cornified envelope protein 2D (LCE2D) (Homo sapiens (Human)).